The sequence spans 282 residues: Putative lactoylglutathione lyase (282 aa).

N-acetylalanine is present on A2. VOC domains lie at 17–141 (RFLH…LIQR) and 147–274 (PLCQ…LVDN). Residue H20 participates in Zn(2+) binding. R24 is a substrate binding site. E71 provides a ligand contact to Zn(2+). 2 residues coordinate substrate: N75 and H89. Zn(2+) contacts are provided by H89 and E137. The active-site Proton donor/acceptor is the E137. 254–255 (LG) contacts substrate.

Belongs to the glyoxalase I family. Zn(2+) serves as cofactor.

The enzyme catalyses (R)-S-lactoylglutathione = methylglyoxal + glutathione. The protein operates within secondary metabolite metabolism; methylglyoxal degradation; (R)-lactate from methylglyoxal: step 1/2. Functionally, catalyzes the conversion of hemimercaptal, formed from methylglyoxal and glutathione, to S-lactoylglutathione. In Brassica oleracea var. gemmifera (Brussel sprouts), this protein is Putative lactoylglutathione lyase.